A 483-amino-acid polypeptide reads, in one-letter code: Probable glycosyltransferase 6 (483 aa).

The Cytoplasmic segment spans residues 1–40 (MAASETAPFGVSAASKGGGGVAGARAQHGQLAVAGRVHDA). Residues 41 to 61 (LVFAAGAVAAVLVLLATASFL) form a helical; Signal-anchor for type II membrane protein membrane-spanning segment. Over 62-483 (SPMPVTNLVA…PLPFDYPAAR (422 aa)) the chain is Lumenal. The N-linked (GlcNAc...) asparagine glycan is linked to Asn-144.

This sequence belongs to the glycosyltransferase 34 family.

It is found in the golgi apparatus membrane. Probable glycosyltransferase that may be involved in the biosynthesis of xyloglucan. The polypeptide is Probable glycosyltransferase 6 (Oryza sativa subsp. indica (Rice)).